We begin with the raw amino-acid sequence, 321 residues long: Eukaryotic translation initiation factor 3 subunit I (321 aa).

5 WD repeats span residues 8–47, 50–89, 140–179, 182–221, and 279–318; these read GHER…RLGT, GHGG…TLSK, VDNS…KLIS, EHSK…HLKT, and GHFG…DDIE.

It belongs to the eIF-3 subunit I family. As to quaternary structure, component of the eukaryotic translation initiation factor 3 (eIF-3) complex.

The protein resides in the cytoplasm. Functionally, component of the eukaryotic translation initiation factor 3 (eIF-3) complex, which is involved in protein synthesis of a specialized repertoire of mRNAs and, together with other initiation factors, stimulates binding of mRNA and methionyl-tRNAi to the 40S ribosome. The eIF-3 complex specifically targets and initiates translation of a subset of mRNAs involved in cell proliferation. The polypeptide is Eukaryotic translation initiation factor 3 subunit I (Nematostella vectensis (Starlet sea anemone)).